The following is a 238-amino-acid chain: Sugar fermentation stimulation protein homolog (238 aa).

Belongs to the SfsA family.

This is Sugar fermentation stimulation protein homolog from Pseudoalteromonas translucida (strain TAC 125).